The chain runs to 185 residues: Casparian strip membrane protein 5 (185 aa).

Topologically, residues 1 to 25 (MKAEAVESGEASTIIAAPKRGINRG) are cytoplasmic. A helical membrane pass occupies residues 26–46 (ISIADLILRGVAAIGTFASAL). At 47–75 (TMGTTSETLTIFTQPIMIRAKYNDLPSLT) the chain is on the extracellular side. Residues 76 to 96 (FFVIANSIVCGYLVLSIPLSI) traverse the membrane as a helical segment. The Cytoplasmic portion of the chain corresponds to 97 to 108 (SHFIRREARITR). Residues 109–129 (IILVIFDTAMVELLTAGASAA) form a helical membrane-spanning segment. The Extracellular portion of the chain corresponds to 130-160 (TVVVYLAHKRNANWLAICQQFNNFCERISGS). The chain crosses the membrane as a helical span at residues 161-181 (LIGSFASIIMIMLIIITSAVA). Topologically, residues 182–185 (LSRH) are cytoplasmic.

Belongs to the Casparian strip membrane proteins (CASP) family. As to quaternary structure, homodimer and heterodimers.

The protein localises to the cell membrane. Regulates membrane-cell wall junctions and localized cell wall deposition. Required for establishment of the Casparian strip membrane domain (CSD) and the subsequent formation of Casparian strips, a cell wall modification of the root endodermis that determines an apoplastic barrier between the intraorganismal apoplasm and the extraorganismal apoplasm and prevents lateral diffusion. The chain is Casparian strip membrane protein 5 from Populus trichocarpa (Western balsam poplar).